Here is a 154-residue protein sequence, read N- to C-terminus: Mitochondrial fission 1 protein (154 aa).

Residues methionine 1–glycine 124 are Cytoplasmic-facing. A helical membrane pass occupies residues methionine 125–methionine 145. Topologically, residues alanine 146–lysine 154 are mitochondrial intermembrane.

Belongs to the FIS1 family.

The protein resides in the mitochondrion outer membrane. Involved in the fragmentation of the mitochondrial network and its perinuclear clustering. Functions downstream of Pink1 and upstream of Drp1 to regulate mitochondrial fission. This is Mitochondrial fission 1 protein from Drosophila melanogaster (Fruit fly).